The sequence spans 743 residues: Phosphoribosylformylglycinamidine synthase subunit PurL (743 aa).

Residue H50 is part of the active site. Y53 and K92 together coordinate ATP. E94 contributes to the Mg(2+) binding site. Substrate-binding positions include 95–98 (SHNH) and R117. The active-site Proton acceptor is the H96. D118 contributes to the Mg(2+) binding site. Substrate is bound at residue Q241. Residue D269 coordinates Mg(2+). Substrate is bound at residue 313–315 (ESQ). The ATP site is built by D494 and G531. Mg(2+) is bound at residue N532. S534 lines the substrate pocket.

This sequence belongs to the FGAMS family. In terms of assembly, monomer. Part of the FGAM synthase complex composed of 1 PurL, 1 PurQ and 2 PurS subunits.

Its subcellular location is the cytoplasm. The enzyme catalyses N(2)-formyl-N(1)-(5-phospho-beta-D-ribosyl)glycinamide + L-glutamine + ATP + H2O = 2-formamido-N(1)-(5-O-phospho-beta-D-ribosyl)acetamidine + L-glutamate + ADP + phosphate + H(+). Its pathway is purine metabolism; IMP biosynthesis via de novo pathway; 5-amino-1-(5-phospho-D-ribosyl)imidazole from N(2)-formyl-N(1)-(5-phospho-D-ribosyl)glycinamide: step 1/2. Its function is as follows. Part of the phosphoribosylformylglycinamidine synthase complex involved in the purines biosynthetic pathway. Catalyzes the ATP-dependent conversion of formylglycinamide ribonucleotide (FGAR) and glutamine to yield formylglycinamidine ribonucleotide (FGAM) and glutamate. The FGAM synthase complex is composed of three subunits. PurQ produces an ammonia molecule by converting glutamine to glutamate. PurL transfers the ammonia molecule to FGAR to form FGAM in an ATP-dependent manner. PurS interacts with PurQ and PurL and is thought to assist in the transfer of the ammonia molecule from PurQ to PurL. The protein is Phosphoribosylformylglycinamidine synthase subunit PurL of Sinorhizobium fredii (strain HH103).